The chain runs to 526 residues: Tyrosine 2,3-aminomutase (526 aa).

The active-site Proton donor/acceptor is Tyr41. Substrate is bound at residue His71. Residues 130 to 132 (ASG) constitute a cross-link (5-imidazolinone (Ala-Gly)). Ser131 carries the 2,3-didehydroalanine (Ser) modification. Positions 183 and 288 each coordinate substrate.

This sequence belongs to the TAL/TAM family. As to quaternary structure, homotetramer; dimer of dimers. Contains an active site 4-methylidene-imidazol-5-one (MIO), which is formed autocatalytically by cyclization and dehydration of residues Ala-Ser-Gly.

It catalyses the reaction L-tyrosine = 3-amino-3-(4-hydroxyphenyl)propanoate. It carries out the reaction L-tyrosine = (E)-4-coumarate + NH4(+). Has aminomutase and, to a much lesser extent, ammonia-lyase activity. Primarily, catalyzes the rearrangement of L-tyrosine to S-beta-tyrosine, which is probably incorporated into secondary metabolite myxovalargin. The aminomutase activity exclusively produces S-beta-tyrosine. The polypeptide is Tyrosine 2,3-aminomutase (Myxococcus sp. (strain Mx-B0)).